The chain runs to 490 residues: Betaine aldehyde dehydrogenase (490 aa).

Ile-27 and Asp-93 together coordinate K(+). An NAD(+)-binding site is contributed by Gly-150–Trp-152. Lys-162 (charge relay system) is an active-site residue. Lys-176–Glu-179 contributes to the NAD(+) binding site. Val-180 serves as a coordination point for K(+). Gly-230–Thr-233 is an NAD(+) binding site. A K(+)-binding site is contributed by Leu-246. The Proton acceptor role is filled by Glu-252. Residues Gly-254, Cys-286, and Glu-387 each coordinate NAD(+). The active-site Nucleophile is Cys-286. A Cysteine sulfenic acid (-SOH) modification is found at Cys-286. K(+) is bound by residues Lys-457 and Gly-460. Glu-464 (charge relay system) is an active-site residue.

Belongs to the aldehyde dehydrogenase family. In terms of assembly, dimer of dimers. The cofactor is K(+).

It carries out the reaction betaine aldehyde + NAD(+) + H2O = glycine betaine + NADH + 2 H(+). It participates in amine and polyamine biosynthesis; betaine biosynthesis via choline pathway; betaine from betaine aldehyde: step 1/1. In terms of biological role, involved in the biosynthesis of the osmoprotectant glycine betaine. Catalyzes the irreversible oxidation of betaine aldehyde to the corresponding acid. This chain is Betaine aldehyde dehydrogenase, found in Pseudomonas syringae pv. syringae (strain B728a).